We begin with the raw amino-acid sequence, 754 residues long: 5-methyltetrahydropteroyltriglutamate--homocysteine methyltransferase (754 aa).

Residues 15-18 (RELK) and Lys-114 each bind 5-methyltetrahydropteroyltri-L-glutamate. Residues 430–432 (IGS) and Glu-483 contribute to the L-homocysteine site. L-methionine is bound by residues 430–432 (IGS) and Glu-483. 5-methyltetrahydropteroyltri-L-glutamate-binding positions include 514 to 515 (RC) and Trp-560. Asp-598 provides a ligand contact to L-homocysteine. Asp-598 is a binding site for L-methionine. Residue Glu-604 participates in 5-methyltetrahydropteroyltri-L-glutamate binding. Positions 641, 643, and 665 each coordinate Zn(2+). The active-site Proton donor is His-694. Cys-726 serves as a coordination point for Zn(2+).

It belongs to the vitamin-B12 independent methionine synthase family. Zn(2+) is required as a cofactor.

It catalyses the reaction 5-methyltetrahydropteroyltri-L-glutamate + L-homocysteine = tetrahydropteroyltri-L-glutamate + L-methionine. It participates in amino-acid biosynthesis; L-methionine biosynthesis via de novo pathway; L-methionine from L-homocysteine (MetE route): step 1/1. Catalyzes the transfer of a methyl group from 5-methyltetrahydrofolate to homocysteine resulting in methionine formation. The protein is 5-methyltetrahydropteroyltriglutamate--homocysteine methyltransferase of Campylobacter jejuni subsp. doylei (strain ATCC BAA-1458 / RM4099 / 269.97).